We begin with the raw amino-acid sequence, 387 residues long: Pepsin-3 (387 aa).

The signal sequence occupies residues Met1–Cys15. Positions Ile16–Phe59 are cleaved as a propeptide — activation peptide. The 310-residue stretch at Tyr75–Ala384 folds into the Peptidase A1 domain. Asp93 is a catalytic residue. Intrachain disulfides connect Cys106–Cys111 and Cys267–Cys271. The active site involves Asp276. Cysteines 310 and 343 form a disulfide.

This sequence belongs to the peptidase A1 family.

The protein localises to the secreted. It catalyses the reaction Preferential cleavage: hydrophobic, preferably aromatic, residues in P1 and P1' positions. Cleaves 1-Phe-|-Val-2, 4-Gln-|-His-5, 13-Glu-|-Ala-14, 14-Ala-|-Leu-15, 15-Leu-|-Tyr-16, 16-Tyr-|-Leu-17, 23-Gly-|-Phe-24, 24-Phe-|-Phe-25 and 25-Phe-|-Tyr-26 bonds in the B chain of insulin.. Functionally, shows particularly broad specificity; although bonds involving phenylalanine and leucine are preferred, many others are also cleaved to some extent. The protein is Pepsin-3 of Oryctolagus cuniculus (Rabbit).